Here is a 616-residue protein sequence, read N- to C-terminus: Chaperone protein HscA (616 aa).

It belongs to the heat shock protein 70 family.

Its function is as follows. Chaperone involved in the maturation of iron-sulfur cluster-containing proteins. Has a low intrinsic ATPase activity which is markedly stimulated by HscB. Involved in the maturation of IscU. In Shigella flexneri serotype 5b (strain 8401), this protein is Chaperone protein HscA.